The chain runs to 232 residues: Ion-translocating oxidoreductase complex subunit E (232 aa).

Transmembrane regions (helical) follow at residues 18-38 (GLVQLLGLCPLLAVTATITNA), 39-59 (LGLGVATMLVLIGSNILVSLV), 69-89 (IPVFVMIIAALVTTVQLLINA), 93-113 (GLYLSLGIFLPLIVTNCIIIG), 127-147 (AAFDGLMMGLGFTLVLAVLGA), and 182-202 (PFLLAMLPPGAFIVMGLLIAL).

It belongs to the NqrDE/RnfAE family. The complex is composed of six subunits: RnfA, RnfB, RnfC, RnfD, RnfE and RnfG.

Its subcellular location is the cell inner membrane. Part of a membrane-bound complex that couples electron transfer with translocation of ions across the membrane. The sequence is that of Ion-translocating oxidoreductase complex subunit E from Shewanella sp. (strain W3-18-1).